A 395-amino-acid chain; its full sequence is Altered inheritance of mitochondria protein 39, mitochondrial (395 aa).

Residues 161–181 (IFGGIFGVIIGYSLIYKVIYL) form a helical membrane-spanning segment.

Belongs to the AIM39 family.

Its subcellular location is the mitochondrion membrane. This is Altered inheritance of mitochondria protein 39, mitochondrial (AIM39) from Saccharomyces cerevisiae (strain YJM789) (Baker's yeast).